The following is a 500-amino-acid chain: NAD(P)H-quinone oxidoreductase chain 4, chloroplastic (500 aa).

14 consecutive transmembrane segments (helical) span residues 4–24 (FPWLTIIVVFPISAGSLMLFL), 35–55 (YTICICILELLLTTYTFCYNF), 87–107 (IGTILLTGFITTLAILAAFPV), 113–130 (LFHFLMLAMYSGQIGSFS), 134–154 (LLLFFIMWELELIPVYLLLSM), 167–187 (FILYTAGSSIFLLIGVLGISL), 211–231 (IILYIGFLIAFAVKSPLIPLH), 242–262 (HYSTCMLLAGILLKMGAYGLV), 272–292 (AHSMFSPWLMVVGTIQIIYAA), 305–325 (IAYSSVSHMGFIIIGIASITD), 330–350 (GAILQIISHGFIGAALFFLAG), 386–406 (LALPGMSGFVAEFIVFFGIIT), 416–436 (ILIIFVMAIGMILTPIYLLSM), and 466–486 (ISSLLPIIGMGIYPDFVLALA).

The protein belongs to the complex I subunit 4 family.

Its subcellular location is the plastid. The protein resides in the chloroplast thylakoid membrane. The catalysed reaction is a plastoquinone + NADH + (n+1) H(+)(in) = a plastoquinol + NAD(+) + n H(+)(out). The enzyme catalyses a plastoquinone + NADPH + (n+1) H(+)(in) = a plastoquinol + NADP(+) + n H(+)(out). This chain is NAD(P)H-quinone oxidoreductase chain 4, chloroplastic, found in Aethionema grandiflorum (Persian stone-cress).